The following is a 395-amino-acid chain: Dihydroorotate dehydrogenase (quinone), mitochondrial (395 aa).

The transit peptide at 1–10 (MAWRQLKKRA) directs the protein to the mitochondrion; not cleaved. Residues 1–10 (MAWRQLKKRA) are Mitochondrial matrix-facing. A helical transmembrane segment spans residues 11–30 (QDAMVILGGGGLLFASYLTA). At 31 to 395 (TGDEHFYAEL…TDAIGADHRR (365 aa)) the chain is on the mitochondrial intermembrane side. FMN-binding positions include 95-99 (AGFDK) and Ser-119. Lys-99 contributes to the substrate binding site. 144–148 (NRYGF) is a substrate binding site. Residues Asn-180 and Asn-211 each contribute to the FMN site. Residue 211-216 (NVSSPN) coordinates substrate. Ser-214 functions as the Nucleophile in the catalytic mechanism. The FMN site is built by Lys-254 and Thr-282. 283 to 284 (NS) provides a ligand contact to substrate. Residues Gly-305, Gly-334, and 355 to 356 (YT) each bind FMN.

Belongs to the dihydroorotate dehydrogenase family. Type 2 subfamily. In terms of assembly, monomer. FMN serves as cofactor. The uncleaved transit peptide is required for mitochondrial targeting and proper membrane integration.

The protein resides in the mitochondrion inner membrane. It carries out the reaction (S)-dihydroorotate + a quinone = orotate + a quinol. It participates in pyrimidine metabolism; UMP biosynthesis via de novo pathway; orotate from (S)-dihydroorotate (quinone route): step 1/1. In terms of biological role, catalyzes the conversion of dihydroorotate to orotate with quinone as electron acceptor. Required for UMP biosynthesis via de novo pathway. This Bos taurus (Bovine) protein is Dihydroorotate dehydrogenase (quinone), mitochondrial (DHODH).